The following is a 427-amino-acid chain: Peptidase B (427 aa).

Lysine 195 and aspartate 200 together coordinate Mn(2+). Lysine 207 is a catalytic residue. 3 residues coordinate Mn(2+): aspartate 218, aspartate 277, and glutamate 279. Arginine 281 is an active-site residue.

This sequence belongs to the peptidase M17 family. In terms of assembly, homohexamer. The cofactor is Mn(2+).

The protein localises to the cytoplasm. It catalyses the reaction Release of an N-terminal amino acid, Xaa, from a peptide or arylamide. Xaa is preferably Glu or Asp but may be other amino acids, including Leu, Met, His, Cys and Gln.. Functionally, probably plays an important role in intracellular peptide degradation. The protein is Peptidase B of Shigella flexneri serotype 5b (strain 8401).